The primary structure comprises 150 residues: Large ribosomal subunit protein bL9 (150 aa).

The protein belongs to the bacterial ribosomal protein bL9 family.

In terms of biological role, binds to the 23S rRNA. This Streptococcus pyogenes serotype M6 (strain ATCC BAA-946 / MGAS10394) protein is Large ribosomal subunit protein bL9.